The chain runs to 429 residues: Zinc finger protein 385C (429 aa).

The Matrin-type 1 zinc-finger motif lies at 77 to 107; it reads ISCNICHLRFNSANQAEAHYKGHRHARKLKA. 3 disordered regions span residues 109–224, 258–295, and 311–340; these read EAAK…GRGE, GHQG…GPSP, and QLKQ…NKLQ. Over residues 125–146 the composition is skewed to low complexity; that stretch reads TVVSSASPPASGSPGTPQSKGP. Residues 147 to 162 show a composition bias toward pro residues; the sequence is ASPPLGPSLQLPPTPD. Positions 181–193 are enriched in low complexity; sequence CDAAASSSSSSCP. The Matrin-type 2 zinc finger occupies 225-259; the sequence is KGRLYCPTCKVTVNSASQLQAHNTGAKHRWMVEGH. Over residues 262–284 the composition is skewed to basic residues; that stretch reads APRRGRGRPVSRGGTGHKTKRVI. The Matrin-type 3 zinc-finger motif lies at 297–327; sequence FHCALCQLHVNSETQLKQHMSSRRHKDRLAG.

Its subcellular location is the nucleus. The sequence is that of Zinc finger protein 385C from Mus musculus (Mouse).